The chain runs to 456 residues: RuvB-like 1 (456 aa).

Positions 1-20 are disordered; the sequence is MKIEEVKSTTKTQRIASHSH. An ATP-binding site is contributed by 70 to 77; it reads GPPGTGKT.

Belongs to the RuvB family. In terms of assembly, forms homohexameric rings. Can form a dodecamer with ruvbl2 made of two stacked hexameric rings. Is a component of the RNA polymerase II holoenzyme complex. Component of the chromatin-remodeling Ino80 complex. Component of some MLL1/MLL complex.

It is found in the nucleus. Its subcellular location is the dynein axonemal particle. It carries out the reaction ATP + H2O = ADP + phosphate + H(+). Its function is as follows. Has single-stranded DNA-stimulated ATPase and ATP-dependent DNA helicase (3' to 5') activity suggesting a role in nuclear processes such as recombination and transcription. Proposed core component of the chromatin remodeling Ino80 complex which exhibits DNA- and nucleosome-activated ATPase activity and catalyzes ATP-dependent nucleosome sliding. May act as a negative regulator of embryonic heart growth. The chain is RuvB-like 1 (ruvbl1) from Danio rerio (Zebrafish).